A 730-amino-acid chain; its full sequence is Zinc finger protein 615 (730 aa).

Positions 7 to 78 (LTLEDVAVDF…EDEIYSRICF (72 aa)) constitute a KRAB domain. 19 C2H2-type zinc fingers span residues 203–225 (HVCS…QRVH), 231–253 (HVCS…QRTH), 259–281 (YECT…QKTH), 287–309 (YTCS…QRTH), 315–337 (HGCS…QKTH), 343–365 (YICS…HRTH), 371–393 (FICN…QQTH), 399–421 (YTCS…QRTH), 427–449 (YKCN…QRTH), 455–477 (YVCT…QRTH), 483–505 (YICN…QRTH), 511–533 (YVCG…QRTH), 539–561 (YICD…RRTH), 567–589 (YVCS…QRTH), 595–617 (YICN…QQTH), 623–645 (YKCN…QRFH), 651–673 (FACT…QRIH), 679–701 (YKCS…QRKH), and 707–729 (YGCS…KRIH).

Belongs to the krueppel C2H2-type zinc-finger protein family.

It is found in the nucleus. In terms of biological role, may be involved in transcriptional regulation. The protein is Zinc finger protein 615 (ZNF615) of Pongo abelii (Sumatran orangutan).